The following is a 511-amino-acid chain: Ribonuclease Y (511 aa).

Residues 3–23 (VGILIGIIILGVVGFIQYTLI) traverse the membrane as a helical segment. The region spanning 201–286 (TVHVVALPND…EMVERAIKDV (86 aa)) is the KH domain. Positions 327–420 (VLKHSIEVSY…VQAADAISAA (94 aa)) constitute an HD domain.

Belongs to the RNase Y family.

It is found in the cell membrane. Functionally, endoribonuclease that initiates mRNA decay. In Clostridium perfringens (strain ATCC 13124 / DSM 756 / JCM 1290 / NCIMB 6125 / NCTC 8237 / Type A), this protein is Ribonuclease Y.